The sequence spans 383 residues: S-adenosylmethionine:tRNA ribosyltransferase-isomerase (383 aa).

Belongs to the QueA family. In terms of assembly, monomer.

The protein resides in the cytoplasm. The enzyme catalyses 7-aminomethyl-7-carbaguanosine(34) in tRNA + S-adenosyl-L-methionine = epoxyqueuosine(34) in tRNA + adenine + L-methionine + 2 H(+). It functions in the pathway tRNA modification; tRNA-queuosine biosynthesis. Functionally, transfers and isomerizes the ribose moiety from AdoMet to the 7-aminomethyl group of 7-deazaguanine (preQ1-tRNA) to give epoxyqueuosine (oQ-tRNA). The protein is S-adenosylmethionine:tRNA ribosyltransferase-isomerase of Rickettsia prowazekii (strain Madrid E).